Here is a 542-residue protein sequence, read N- to C-terminus: CTP synthase (542 aa).

Positions 1 to 265 are amidoligase domain; it reads MTRFIFITGG…DVQVCRHFHL (265 aa). Position 13 (serine 13) interacts with CTP. Serine 13 contacts UTP. ATP contacts are provided by residues 14–19 and aspartate 71; that span reads SLGKGL. Residues aspartate 71 and glutamate 139 each contribute to the Mg(2+) site. CTP is bound by residues 146–148, 186–191, and lysine 222; these read DIE and KTKPTQ. Residues 186-191 and lysine 222 contribute to the UTP site; that span reads KTKPTQ. In terms of domain architecture, Glutamine amidotransferase type-1 spans 291–541; the sequence is TIAVVGKYTS…VQAAITQSRL (251 aa). Glycine 353 contributes to the L-glutamine binding site. The active-site Nucleophile; for glutamine hydrolysis is the cysteine 380. Residues 381–384, glutamate 404, and arginine 469 contribute to the L-glutamine site; that span reads FGMQ. Active-site residues include histidine 514 and glutamate 516.

This sequence belongs to the CTP synthase family. As to quaternary structure, homotetramer.

It catalyses the reaction UTP + L-glutamine + ATP + H2O = CTP + L-glutamate + ADP + phosphate + 2 H(+). The enzyme catalyses L-glutamine + H2O = L-glutamate + NH4(+). It carries out the reaction UTP + NH4(+) + ATP = CTP + ADP + phosphate + 2 H(+). The protein operates within pyrimidine metabolism; CTP biosynthesis via de novo pathway; CTP from UDP: step 2/2. With respect to regulation, allosterically activated by GTP, when glutamine is the substrate; GTP has no effect on the reaction when ammonia is the substrate. The allosteric effector GTP functions by stabilizing the protein conformation that binds the tetrahedral intermediate(s) formed during glutamine hydrolysis. Inhibited by the product CTP, via allosteric rather than competitive inhibition. Its function is as follows. Catalyzes the ATP-dependent amination of UTP to CTP with either L-glutamine or ammonia as the source of nitrogen. Regulates intracellular CTP levels through interactions with the four ribonucleotide triphosphates. The protein is CTP synthase of Rhodospirillum rubrum (strain ATCC 11170 / ATH 1.1.1 / DSM 467 / LMG 4362 / NCIMB 8255 / S1).